The following is a 132-amino-acid chain: uncharacterized protein (132 aa).

Residues 107-132 (LNTFSGSGQKHSQPGSGQHPFSFRKD) are disordered. A compositionally biased stretch (polar residues) spans 108 to 122 (NTFSGSGQKHSQPGS).

This is an uncharacterized protein from Bacillus subtilis (strain 168).